The primary structure comprises 860 residues: Late endosome and vacuole interface protein 11 (860 aa).

The interval 19-45 (EIINNSDHSSSHSTSHEEEDEEEDDTE) is disordered. Low complexity predominate over residues 20-31 (IINNSDHSSSHS). Residues 35 to 45 (EEEDEEEDDTE) show a composition bias toward acidic residues. The BED-type zinc finger occupies 84 to 138 (KNIAKFWSHFLAIEKKLTKVKCKHCGEILTRSDASLTKTFRSHLKTKHNISANKN). Residues Cys105, Cys108, His126, and His131 each contribute to the Zn(2+) site.

The protein belongs to the VID22 family.

Its subcellular location is the nucleus. In terms of biological role, involved in vacuolar processing and morphology. The protein is Late endosome and vacuole interface protein 11 (ENV11) of Saccharomyces cerevisiae (strain ATCC 204508 / S288c) (Baker's yeast).